The primary structure comprises 404 residues: Cysteine desulfurase IscS (404 aa).

Pyridoxal 5'-phosphate is bound by residues 73–74 (AT), asparagine 153, glutamine 181, and 201–203 (SAH). Lysine 204 bears the N6-(pyridoxal phosphate)lysine mark. Threonine 241 is a pyridoxal 5'-phosphate binding site. Cysteine 327 functions as the Cysteine persulfide intermediate in the catalytic mechanism. Cysteine 327 serves as a coordination point for [2Fe-2S] cluster.

The protein belongs to the class-V pyridoxal-phosphate-dependent aminotransferase family. NifS/IscS subfamily. Homodimer. Forms a heterotetramer with IscU, interacts with other sulfur acceptors. It depends on pyridoxal 5'-phosphate as a cofactor.

It localises to the cytoplasm. The catalysed reaction is (sulfur carrier)-H + L-cysteine = (sulfur carrier)-SH + L-alanine. Its pathway is cofactor biosynthesis; iron-sulfur cluster biosynthesis. Its function is as follows. Master enzyme that delivers sulfur to a number of partners involved in Fe-S cluster assembly, tRNA modification or cofactor biosynthesis. Catalyzes the removal of elemental sulfur atoms from cysteine to produce alanine. Functions as a sulfur delivery protein for Fe-S cluster synthesis onto IscU, an Fe-S scaffold assembly protein, as well as other S acceptor proteins. This chain is Cysteine desulfurase IscS, found in Anaeromyxobacter dehalogenans (strain 2CP-C).